A 608-amino-acid polypeptide reads, in one-letter code: Isocitrate dehydrogenase kinase/phosphatase (608 aa).

ATP-binding positions include 327 to 333 (APGIKGL) and Lys-348. Residue Asp-383 is part of the active site.

The protein belongs to the AceK family.

It localises to the cytoplasm. It carries out the reaction L-seryl-[isocitrate dehydrogenase] + ATP = O-phospho-L-seryl-[isocitrate dehydrogenase] + ADP + H(+). In terms of biological role, bifunctional enzyme which can phosphorylate or dephosphorylate isocitrate dehydrogenase (IDH) on a specific serine residue. This is a regulatory mechanism which enables bacteria to bypass the Krebs cycle via the glyoxylate shunt in response to the source of carbon. When bacteria are grown on glucose, IDH is fully active and unphosphorylated, but when grown on acetate or ethanol, the activity of IDH declines drastically concomitant with its phosphorylation. This is Isocitrate dehydrogenase kinase/phosphatase from Burkholderia ambifaria (strain ATCC BAA-244 / DSM 16087 / CCUG 44356 / LMG 19182 / AMMD) (Burkholderia cepacia (strain AMMD)).